A 154-amino-acid chain; its full sequence is 6,7-dimethyl-8-ribityllumazine synthase (154 aa).

5-amino-6-(D-ribitylamino)uracil is bound by residues Phe-24, 56 to 58 (SFE), and 80 to 82 (AVV). 85-86 (ET) provides a ligand contact to (2S)-2-hydroxy-3-oxobutyl phosphate. Catalysis depends on His-88, which acts as the Proton donor. Phe-113 provides a ligand contact to 5-amino-6-(D-ribitylamino)uracil. Arg-127 serves as a coordination point for (2S)-2-hydroxy-3-oxobutyl phosphate.

The protein belongs to the DMRL synthase family.

The catalysed reaction is (2S)-2-hydroxy-3-oxobutyl phosphate + 5-amino-6-(D-ribitylamino)uracil = 6,7-dimethyl-8-(1-D-ribityl)lumazine + phosphate + 2 H2O + H(+). It participates in cofactor biosynthesis; riboflavin biosynthesis; riboflavin from 2-hydroxy-3-oxobutyl phosphate and 5-amino-6-(D-ribitylamino)uracil: step 1/2. In terms of biological role, catalyzes the formation of 6,7-dimethyl-8-ribityllumazine by condensation of 5-amino-6-(D-ribitylamino)uracil with 3,4-dihydroxy-2-butanone 4-phosphate. This is the penultimate step in the biosynthesis of riboflavin. The chain is 6,7-dimethyl-8-ribityllumazine synthase from Thermococcus gammatolerans (strain DSM 15229 / JCM 11827 / EJ3).